The chain runs to 274 residues: Nitrate import ATP-binding protein NrtD (274 aa).

Residues 17–250 (LHFDCVGKTF…RPREREAVVE (234 aa)) enclose the ABC transporter domain. 53-60 (GHSGCGKS) serves as a coordination point for ATP.

It belongs to the ABC transporter superfamily. Nitrate/nitrite/cyanate uptake transporter (NitT) (TC 3.A.1.16) family. In terms of assembly, the complex is composed of two ATP-binding proteins (NrtC and NrtD), two transmembrane proteins (NrtB) and a solute-binding protein (NrtA).

It localises to the cell inner membrane. It carries out the reaction nitrate(out) + ATP + H2O = nitrate(in) + ADP + phosphate + H(+). In terms of biological role, part of the ABC transporter complex NrtABCD involved in nitrate uptake. The complex is probably also involved in nitrite transport. Probably responsible for energy coupling to the transport system. This Synechococcus elongatus (strain ATCC 33912 / PCC 7942 / FACHB-805) (Anacystis nidulans R2) protein is Nitrate import ATP-binding protein NrtD.